The following is a 179-amino-acid chain: Nucleoside-triphosphatase THEP1 (179 aa).

ATP is bound by residues 7 to 14 (GMPGVGKT) and 98 to 105 (IIIIDEIG).

It belongs to the THEP1 NTPase family.

It carries out the reaction a ribonucleoside 5'-triphosphate + H2O = a ribonucleoside 5'-diphosphate + phosphate + H(+). Functionally, has nucleotide phosphatase activity towards ATP, GTP, CTP, TTP and UTP. May hydrolyze nucleoside diphosphates with lower efficiency. This Pyrococcus abyssi (strain GE5 / Orsay) protein is Nucleoside-triphosphatase THEP1.